The sequence spans 492 residues: Bifunctional purine biosynthesis protein PurH (492 aa).

The region spanning 1 to 144 (MKKVILSVSD…KNFKHVTTIV (144 aa)) is the MGS-like domain.

This sequence belongs to the PurH family.

The catalysed reaction is (6R)-10-formyltetrahydrofolate + 5-amino-1-(5-phospho-beta-D-ribosyl)imidazole-4-carboxamide = 5-formamido-1-(5-phospho-D-ribosyl)imidazole-4-carboxamide + (6S)-5,6,7,8-tetrahydrofolate. It catalyses the reaction IMP + H2O = 5-formamido-1-(5-phospho-D-ribosyl)imidazole-4-carboxamide. It functions in the pathway purine metabolism; IMP biosynthesis via de novo pathway; 5-formamido-1-(5-phospho-D-ribosyl)imidazole-4-carboxamide from 5-amino-1-(5-phospho-D-ribosyl)imidazole-4-carboxamide (10-formyl THF route): step 1/1. It participates in purine metabolism; IMP biosynthesis via de novo pathway; IMP from 5-formamido-1-(5-phospho-D-ribosyl)imidazole-4-carboxamide: step 1/1. This is Bifunctional purine biosynthesis protein PurH from Staphylococcus carnosus (strain TM300).